Consider the following 835-residue polypeptide: Replication origin-binding protein (835 aa).

The Helicase ATP-binding domain occupies 54 to 215; that stretch reads PGMSQTRPVT…SGLRGDENIH (162 aa). Residue 67–74 participates in ATP binding; sequence APMGSGKT.

The protein belongs to the herpesviridae OriBP family. Homodimer. Interacts with the major DNA-binding protein. Interacts with the helicase/primase component 52 and the polymerase accessory protein.

The protein resides in the host nucleus. Its function is as follows. Functions as a docking protein to recruit essential components of the viral replication machinery to viral DNA origins. In the presence of the major DNA-binding protein, opens dsDNA leading to a conformational change in the origin that facilitates DNA unwinding and subsequent replication. This chain is Replication origin-binding protein, found in Varicella-zoster virus (strain Oka vaccine) (HHV-3).